Here is a 90-residue protein sequence, read N- to C-terminus: U7-theraphotoxin-Hhn1a 4 (90 aa).

The signal sequence occupies residues 1 to 19 (MKTAIFTVVLALAVFAVLS). Residues 20 to 50 (FGWEANEEALSEEFTELIHEKEAASETEARE) constitute a propeptide that is removed on maturation. 3 cysteine pairs are disulfide-bonded: Cys51/Cys65, Cys58/Cys70, and Cys64/Cys81.

Belongs to the neurotoxin 10 (Hwtx-1) family. 13 (Hntx-13) subfamily. As to expression, expressed by the venom gland.

It is found in the secreted. In terms of biological role, ion channel inhibitor. The protein is U7-theraphotoxin-Hhn1a 4 of Cyriopagopus hainanus (Chinese bird spider).